The following is a 152-amino-acid chain: Transmembrane protein 35B (152 aa).

The first 21 residues, 1–21 (MLVSLGALRVLLGIFFTLTGA), serve as a signal peptide directing secretion. 3 consecutive transmembrane segments (helical) span residues 62–82 (AAVG…PPVL), 85–105 (ISNV…VVLE), and 111–131 (YIPA…QFLV).

Belongs to the DoxX family.

It is found in the membrane. The sequence is that of Transmembrane protein 35B from Rattus norvegicus (Rat).